Reading from the N-terminus, the 309-residue chain is Protein FdhE (309 aa).

It belongs to the FdhE family.

The protein localises to the cytoplasm. In terms of biological role, necessary for formate dehydrogenase activity. This Escherichia coli O9:H4 (strain HS) protein is Protein FdhE.